The following is a 111-amino-acid chain: Large ribosomal subunit protein P2-2 (111 aa).

A disordered region spans residues 86–111 (APAAAAAKKDEPEEEADDDMGFGLFD).

Belongs to the eukaryotic ribosomal protein P1/P2 family. P1 and P2 exist as dimers at the large ribosomal subunit. Post-translationally, phosphorylated.

In terms of biological role, plays an important role in the elongation step of protein synthesis. The sequence is that of Large ribosomal subunit protein P2-2 (LIP') from Leishmania infantum.